Consider the following 238-residue polypeptide: Aspartate/glutamate leucyltransferase (238 aa).

It belongs to the R-transferase family. Bpt subfamily.

It is found in the cytoplasm. The enzyme catalyses N-terminal L-glutamyl-[protein] + L-leucyl-tRNA(Leu) = N-terminal L-leucyl-L-glutamyl-[protein] + tRNA(Leu) + H(+). It carries out the reaction N-terminal L-aspartyl-[protein] + L-leucyl-tRNA(Leu) = N-terminal L-leucyl-L-aspartyl-[protein] + tRNA(Leu) + H(+). In terms of biological role, functions in the N-end rule pathway of protein degradation where it conjugates Leu from its aminoacyl-tRNA to the N-termini of proteins containing an N-terminal aspartate or glutamate. This is Aspartate/glutamate leucyltransferase from Shewanella sp. (strain ANA-3).